A 941-amino-acid chain; its full sequence is Isoleucine--tRNA ligase (941 aa).

Positions proline 59 to histidine 69 match the 'HIGH' region motif. L-isoleucyl-5'-AMP is bound at residue glutamate 562. The 'KMSKS' region motif lies at lysine 603–serine 607. Residue lysine 606 coordinates ATP. Residues cysteine 904, cysteine 907, cysteine 924, and cysteine 927 each contribute to the Zn(2+) site.

Belongs to the class-I aminoacyl-tRNA synthetase family. IleS type 1 subfamily. In terms of assembly, monomer. Zn(2+) is required as a cofactor.

It is found in the cytoplasm. The enzyme catalyses tRNA(Ile) + L-isoleucine + ATP = L-isoleucyl-tRNA(Ile) + AMP + diphosphate. In terms of biological role, catalyzes the attachment of isoleucine to tRNA(Ile). As IleRS can inadvertently accommodate and process structurally similar amino acids such as valine, to avoid such errors it has two additional distinct tRNA(Ile)-dependent editing activities. One activity is designated as 'pretransfer' editing and involves the hydrolysis of activated Val-AMP. The other activity is designated 'posttransfer' editing and involves deacylation of mischarged Val-tRNA(Ile). The chain is Isoleucine--tRNA ligase from Haemophilus influenzae (strain 86-028NP).